The following is a 406-amino-acid chain: tRNA-specific 2-thiouridylase MnmA (406 aa).

ATP contacts are provided by residues 6 to 13 (AMSGGVDS) and Leu-32. The active-site Nucleophile is Cys-101. Cys-101 and Cys-193 are joined by a disulfide. An ATP-binding site is contributed by Gly-125. The tract at residues 143–145 (KDQ) is interaction with tRNA. The Cysteine persulfide intermediate role is filled by Cys-193. Residues 378–406 (GAPIEEQPAPGTVGAVDADAIEQGEDAQR) are disordered. Positions 396-406 (DAIEQGEDAQR) are enriched in acidic residues.

It belongs to the MnmA/TRMU family.

The protein resides in the cytoplasm. The catalysed reaction is S-sulfanyl-L-cysteinyl-[protein] + uridine(34) in tRNA + AH2 + ATP = 2-thiouridine(34) in tRNA + L-cysteinyl-[protein] + A + AMP + diphosphate + H(+). Its function is as follows. Catalyzes the 2-thiolation of uridine at the wobble position (U34) of tRNA, leading to the formation of s(2)U34. This Corynebacterium urealyticum (strain ATCC 43042 / DSM 7109) protein is tRNA-specific 2-thiouridylase MnmA.